We begin with the raw amino-acid sequence, 312 residues long: Bifunctional pinoresinol-lariciresinol reductase (312 aa).

Residues 11-17 (GGTGYIG), Arg36, and Lys45 each bind NADP(+). Catalysis depends on Lys138, which acts as the Proton acceptor. Arg142 provides a ligand contact to NADP(+). His270 provides a ligand contact to substrate.

The protein belongs to the NmrA-type oxidoreductase family. Isoflavone reductase subfamily. As to quaternary structure, dimer.

It catalyses the reaction (+)-lariciresinol + NADP(+) = (+)-pinoresinol + NADPH + H(+). It carries out the reaction (-)-secoisolariciresinol + NADP(+) = (+)-lariciresinol + NADPH + H(+). In terms of biological role, reductase involved in lignan biosynthesis. Catalyzes the enantioselective sequential conversion of (+)-pinoresinol into (+)-lariciresinol and of (+)-lariciresinol into (-)-secoisolariciresinol. Abstracts the 4R-hydride from the NADPH cofactor during catalysis. The protein is Bifunctional pinoresinol-lariciresinol reductase of Thuja plicata (Western red-cedar).